Reading from the N-terminus, the 665-residue chain is MGPLRESKKEQRVQHQEKEISRSRIPRLILRPHRPQQQQQQQNKVSPASESPFSEEESREFNPSSSGRSARTISSNSFCSDDTGCPSSQSVSPVKTPSDTGHSPIGFCPGSDEDFTRKKCRIGMVGEGSIQSARHKKEPKGGIIKPGSEADFSSSSSTGSISAPEVHMSTTGNKRASFSRNRGPHGRSNGASSHKSGSSPPSPREKDLVSMLCRNPLSPSNIHPSYAPSSPSSSNSGSYKGSDCSPVMRRSGRYMSCGENHGVKPPNPEQYLTPLQQKEVTVRHLRTKLKESERRLHERESEIMELKSQLARMREDWIEEECHRVEAQLALKEARKEIKQLKQVIETMRSSLADKDKGIQKYFVDINIQNKKLESLLQSMEMAHNSSLRDELCLDFSFDSPEKSLPLSSTFDKLPDGLSLEEQITEEGADSELLVGDSMAEGTDLLDEMVTATTTESSGLEFVHSTPGPQALKALPLVSHEEGIAVMEQAVQTDVVPFSPAISELIQSVLKLQDYCPTSSASPDESGADSMESFSESISALMLDLTPRSPNSAILLSPVEIPFSKGAMEAHANRLMRELDFAAYTEERLDSVLSLSQGSVVRQYWSSNFLVDLLAVAAPVVPTVLWAFSTQRGGTDPVYNIGALLRGCCVVALHSLRRTAFHMKT.

Residues 1–22 (MGPLRESKKEQRVQHQEKEISR) are compositionally biased toward basic and acidic residues. Residues 1–271 (MGPLRESKKE…GVKPPNPEQY (271 aa)) are disordered. The tract at residues 2–421 (GPLRESKKEQ…DKLPDGLSLE (420 aa)) is sufficient for interaction with KIF5B. The span at 35–52 (PQQQQQQQNKVSPASESP) shows a compositional bias: low complexity. The residue at position 54 (serine 54) is a Phosphoserine. The span at 61–77 (FNPSSSGRSARTISSNS) shows a compositional bias: low complexity. Residues 85–101 (CPSSQSVSPVKTPSDTG) show a composition bias toward polar residues. Phosphoserine is present on serine 111. A compositionally biased stretch (low complexity) spans 141–162 (GGIIKPGSEADFSSSSSTGSIS). The span at 168-180 (MSTTGNKRASFSR) shows a compositional bias: polar residues. Positions 225 to 245 (SYAPSSPSSSNSGSYKGSDCS) are enriched in low complexity. Positions 275 to 357 (LQQKEVTVRH…MRSSLADKDK (83 aa)) form a coiled coil. Residues 314–421 (REDWIEEECH…DKLPDGLSLE (108 aa)) are sufficient for interaction with STX1A. Phosphoserine occurs at positions 400 and 557. The chain crosses the membrane as a helical span at residues 609–629 (FLVDLLAVAAPVVPTVLWAFS).

As to quaternary structure, interacts with STX1A and KIF5B.

Its subcellular location is the golgi apparatus membrane. Functionally, part of a kinesin motor-adapter complex that is critical for the anterograde axonal transport of active zone components and contributes to activity-dependent presynaptic assembly during neuronal development. The polypeptide is Syntabulin (Sybu) (Mus musculus (Mouse)).